The sequence spans 384 residues: UDP-4-amino-4-deoxy-L-arabinose--oxoglutarate aminotransferase (384 aa).

At K182 the chain carries N6-(pyridoxal phosphate)lysine.

It belongs to the DegT/DnrJ/EryC1 family. ArnB subfamily. In terms of assembly, homodimer. It depends on pyridoxal 5'-phosphate as a cofactor.

It carries out the reaction UDP-4-amino-4-deoxy-beta-L-arabinose + 2-oxoglutarate = UDP-beta-L-threo-pentopyranos-4-ulose + L-glutamate. Its pathway is nucleotide-sugar biosynthesis; UDP-4-deoxy-4-formamido-beta-L-arabinose biosynthesis; UDP-4-deoxy-4-formamido-beta-L-arabinose from UDP-alpha-D-glucuronate: step 2/3. It functions in the pathway bacterial outer membrane biogenesis; lipopolysaccharide biosynthesis. Catalyzes the conversion of UDP-4-keto-arabinose (UDP-Ara4O) to UDP-4-amino-4-deoxy-L-arabinose (UDP-L-Ara4N). The modified arabinose is attached to lipid A and is required for resistance to polymyxin and cationic antimicrobial peptides. The sequence is that of UDP-4-amino-4-deoxy-L-arabinose--oxoglutarate aminotransferase from Yersinia pseudotuberculosis serotype O:1b (strain IP 31758).